The chain runs to 252 residues: ATP synthase subunit a (252 aa).

Helical transmembrane passes span 29–49 (FTNVSLFTVVTVVITAAFLFI), 87–107 (FFPLVFSLFTFILVANFIGLF), 117–137 (IMITFSLAMVVILTVIGYGFY), 146–166 (LFVPSGVPVVVLPLVTMIEII), 196–216 (FIVSMIGVGIVGVGGAVLPLI), and 219–239 (VAITALEFLVAFLQAYVFTVL).

The protein belongs to the ATPase A chain family. In terms of assembly, F-type ATPases have 2 components, CF(1) - the catalytic core - and CF(0) - the membrane proton channel. CF(1) has five subunits: alpha(3), beta(3), gamma(1), delta(1), epsilon(1). CF(0) has three main subunits: a(1), b(2) and c(9-12). The alpha and beta chains form an alternating ring which encloses part of the gamma chain. CF(1) is attached to CF(0) by a central stalk formed by the gamma and epsilon chains, while a peripheral stalk is formed by the delta and b chains.

It is found in the cell inner membrane. Functionally, key component of the proton channel; it plays a direct role in the translocation of protons across the membrane. This is ATP synthase subunit a from Bartonella tribocorum (strain CIP 105476 / IBS 506).